The chain runs to 382 residues: Mannitol-1-phosphate 5-dehydrogenase (382 aa).

Ala3–Gly14 serves as a coordination point for NAD(+). Position 269 is an N6-acetyllysine (Lys269).

Belongs to the mannitol dehydrogenase family.

It carries out the reaction D-mannitol 1-phosphate + NAD(+) = beta-D-fructose 6-phosphate + NADH + H(+). This Shigella boydii serotype 18 (strain CDC 3083-94 / BS512) protein is Mannitol-1-phosphate 5-dehydrogenase.